Reading from the N-terminus, the 602-residue chain is Adenylosuccinate synthetase (602 aa).

GTP-binding positions include Gly74 to Lys80 and Gly104 to Thr106. The Proton acceptor role is filled by Asp75. Residues Asp75 and Gly104 each contribute to the Mg(2+) site. IMP-binding positions include Asp75–Lys78, Asn102–His105, Thr189, Lys203, Gln315, Thr331, and Lys459. The Proton donor role is filled by His105. Ala455–Arg461 provides a ligand contact to substrate. GTP is bound by residues Arg461 and Gly589–Gly591.

It belongs to the adenylosuccinate synthetase family. As to quaternary structure, homodimer. Requires Mg(2+) as cofactor.

Its subcellular location is the cytoplasm. The enzyme catalyses IMP + L-aspartate + GTP = N(6)-(1,2-dicarboxyethyl)-AMP + GDP + phosphate + 2 H(+). Its pathway is purine metabolism; AMP biosynthesis via de novo pathway; AMP from IMP: step 1/2. Its function is as follows. Plays an important role in the salvage pathway for purine nucleotide biosynthesis. Catalyzes the first committed step in the biosynthesis of AMP from IMP. The protein is Adenylosuccinate synthetase of Trypanosoma brucei brucei (strain 927/4 GUTat10.1).